A 94-amino-acid chain; its full sequence is Small ribosomal subunit protein uS19 (94 aa).

It belongs to the universal ribosomal protein uS19 family.

Its function is as follows. Protein S19 forms a complex with S13 that binds strongly to the 16S ribosomal RNA. The polypeptide is Small ribosomal subunit protein uS19 (Finegoldia magna (strain ATCC 29328 / DSM 20472 / WAL 2508) (Peptostreptococcus magnus)).